A 234-amino-acid polypeptide reads, in one-letter code: tRNA1(Val) (adenine(37)-N6)-methyltransferase (234 aa).

This sequence belongs to the methyltransferase superfamily. tRNA (adenine-N(6)-)-methyltransferase family.

The protein localises to the cytoplasm. It catalyses the reaction adenosine(37) in tRNA1(Val) + S-adenosyl-L-methionine = N(6)-methyladenosine(37) in tRNA1(Val) + S-adenosyl-L-homocysteine + H(+). Its function is as follows. Specifically methylates the adenine in position 37 of tRNA(1)(Val) (anticodon cmo5UAC). The protein is tRNA1(Val) (adenine(37)-N6)-methyltransferase of Aliivibrio fischeri (strain ATCC 700601 / ES114) (Vibrio fischeri).